A 247-amino-acid polypeptide reads, in one-letter code: MAERPQRVPASTEQESALVLFSGGQDSTACLAWALEYFSRVETVGFAYGQRHDVELSAREEVLDGLRALRPDWAARLGSDRVLDAGVLGEISDTALTQDAEIAYDARGLPTTFVPGRNLLFFTLAAAVAHRRGIRHLVAGVCETDFSGYPDCRDDTVKSLQVTLNLGMAERLVLHTPLMWLDKAQTWMLAEQLGGSALVDLTVEASHTCYYGMREQRHEWGYGCGECPACRLRAEGWHRFRHGSGAQ.

21–31 (FSGGQDSTACL) serves as a coordination point for ATP. The Zn(2+) site is built by Cys-209, Cys-224, Cys-227, and Cys-230.

The protein belongs to the QueC family. Requires Zn(2+) as cofactor.

It catalyses the reaction 7-carboxy-7-deazaguanine + NH4(+) + ATP = 7-cyano-7-deazaguanine + ADP + phosphate + H2O + H(+). It participates in purine metabolism; 7-cyano-7-deazaguanine biosynthesis. Its function is as follows. Catalyzes the ATP-dependent conversion of 7-carboxy-7-deazaguanine (CDG) to 7-cyano-7-deazaguanine (preQ(0)). This is 7-cyano-7-deazaguanine synthase from Halorhodospira halophila (strain DSM 244 / SL1) (Ectothiorhodospira halophila (strain DSM 244 / SL1)).